The sequence spans 109 residues: Protein GOLVEN 5 (109 aa).

The first 24 residues, Met-1–Ser-24, serve as a signal peptide directing secretion. A propeptide spanning residues Leu-25–Ala-96 is cleaved from the precursor. Positions Lys-54–Glu-88 are disordered. Residue Tyr-98 is modified to Sulfotyrosine. Hydroxyproline is present on Pro-106.

The protein belongs to the RGF family. Binds to LRR receptor-like serine/threonine-protein kinases RGI1, RGI2 and RGI3 to trigger their dimerization with SERK proteins and subsequent signaling. As to expression, expressed in root tips.

The protein localises to the secreted. Functionally, signaling peptide (root growth factor) that maintains the postembryonic root stem cell niche in a PIN2-traffic dependent manner. Root growth factor that regulates the pattern of root growth and lateral root development by modulating the length and the number of cortical cells in the root apical meristem (RAM), and the anticlinal asymmetric cell divisions in lateral root initiation cells. Influences the longitudinal growth rate in the primary root in response to phosphate ion (Pi)-deprivation. This chain is Protein GOLVEN 5, found in Arabidopsis thaliana (Mouse-ear cress).